A 540-amino-acid polypeptide reads, in one-letter code: 2-isopropylmalate synthase (540 aa).

The 264-residue stretch at 8–271 (VLIFDTTLRD…NPFFGRESDS (264 aa)) folds into the Pyruvate carboxyltransferase domain. Mn(2+)-binding residues include aspartate 17, histidine 208, histidine 210, and asparagine 244. A regulatory domain region spans residues 408 to 540 (QLRLVQVSCG…AVLADRRPGI (133 aa)).

It belongs to the alpha-IPM synthase/homocitrate synthase family. LeuA type 1 subfamily. Homodimer. It depends on Mn(2+) as a cofactor.

It is found in the cytoplasm. The enzyme catalyses 3-methyl-2-oxobutanoate + acetyl-CoA + H2O = (2S)-2-isopropylmalate + CoA + H(+). The protein operates within amino-acid biosynthesis; L-leucine biosynthesis; L-leucine from 3-methyl-2-oxobutanoate: step 1/4. Its function is as follows. Catalyzes the condensation of the acetyl group of acetyl-CoA with 3-methyl-2-oxobutanoate (2-ketoisovalerate) to form 3-carboxy-3-hydroxy-4-methylpentanoate (2-isopropylmalate). In Prochlorococcus marinus (strain MIT 9303), this protein is 2-isopropylmalate synthase.